We begin with the raw amino-acid sequence, 463 residues long: Probable mannan endo-1,4-beta-mannosidase F (463 aa).

The N-terminal stretch at M1 to A18 is a signal peptide. The region spanning Q19–V54 is the CBM1 domain. Residues A57–I78 form a disordered region. Over residues S59–S77 the composition is skewed to low complexity. A ser-rich linker region spans residues S75–S118. N-linked (GlcNAc...) asparagine glycosylation is present at N87. Residues S93–S118 show a composition bias toward low complexity. The disordered stretch occupies residues S93–K121. A catalytic region spans residues F119–N463. Positions 171 and 285 each coordinate substrate. E286 acts as the Proton donor/acceptor in catalysis. Position 361 (Y361) interacts with substrate. E395 serves as the catalytic Nucleophile. W424 is a binding site for substrate.

This sequence belongs to the glycosyl hydrolase 5 (cellulase A) family.

Its subcellular location is the secreted. It catalyses the reaction Random hydrolysis of (1-&gt;4)-beta-D-mannosidic linkages in mannans, galactomannans and glucomannans.. Endo-1,4-mannanase, a crucial enzyme for depolymerization of seed galactomannans and wood galactoglucomannans. The polypeptide is Probable mannan endo-1,4-beta-mannosidase F (manF) (Aspergillus oryzae (strain ATCC 42149 / RIB 40) (Yellow koji mold)).